The sequence spans 582 residues: Glutamine--tRNA ligase (582 aa).

Positions 50-60 (PEPNGYLHIGH) match the 'HIGH' region motif. ATP is bound by residues 51–53 (EPN) and 57–63 (HIGHAKS). Residues aspartate 83 and tyrosine 235 each coordinate L-glutamine. Residues threonine 254 and 289 to 290 (RL) each bind ATP. Positions 296 to 300 (ITSKR) match the 'KMSKS' region motif.

The protein belongs to the class-I aminoacyl-tRNA synthetase family. As to quaternary structure, monomer.

Its subcellular location is the cytoplasm. The enzyme catalyses tRNA(Gln) + L-glutamine + ATP = L-glutaminyl-tRNA(Gln) + AMP + diphosphate. This Cupriavidus metallidurans (strain ATCC 43123 / DSM 2839 / NBRC 102507 / CH34) (Ralstonia metallidurans) protein is Glutamine--tRNA ligase.